The primary structure comprises 153 residues: Small ribosomal subunit protein bS16 (153 aa).

Residues 114-153 (ENEPVGEAITPKKKKAKAEDAEAAADAPAEAAAESEAADK) are disordered. The segment covering 137–153 (AADAPAEAAAESEAADK) has biased composition (low complexity).

The protein belongs to the bacterial ribosomal protein bS16 family.

In Rhodococcus opacus (strain B4), this protein is Small ribosomal subunit protein bS16.